Reading from the N-terminus, the 148-residue chain is Stathmin (148 aa).

The 142-residue stretch at Ser4–Ala145 folds into the SLD domain. Position 16 is a phosphoserine; by PKA (Ser16). Phosphoserine; by CDK1 is present on Ser38. Residues Lys41–Lys140 adopt a coiled-coil conformation. Ser63 bears the Phosphoserine; by PKA mark. The disordered stretch occupies residues Arg122–Asn148.

The protein belongs to the stathmin family. In terms of assembly, binds to two alpha/beta-tubulin heterodimers. Post-translationally, many different phosphorylated forms are observed depending on specific combinations among the sites which can be phosphorylated. MAPK is responsible for the phosphorylation of stathmin in response to NGF.

The protein resides in the cytoplasm. It is found in the cytoskeleton. Functionally, involved in the regulation of the microtubule (MT) filament system by destabilizing microtubules. It prevents assembly and promotes disassembly of microtubules. In Gallus gallus (Chicken), this protein is Stathmin (STMN1).